Reading from the N-terminus, the 283-residue chain is 3-methyl-2-oxobutanoate hydroxymethyltransferase (283 aa).

Positions 46 and 85 each coordinate Mg(2+). 3-methyl-2-oxobutanoate-binding positions include 46 to 47, D85, and K115; that span reads DS. E117 contributes to the Mg(2+) binding site. Residue E184 is the Proton acceptor of the active site.

It belongs to the PanB family. In terms of assembly, homodecamer; pentamer of dimers. Mg(2+) is required as a cofactor.

It is found in the cytoplasm. The catalysed reaction is 3-methyl-2-oxobutanoate + (6R)-5,10-methylene-5,6,7,8-tetrahydrofolate + H2O = 2-dehydropantoate + (6S)-5,6,7,8-tetrahydrofolate. The protein operates within cofactor biosynthesis; (R)-pantothenate biosynthesis; (R)-pantoate from 3-methyl-2-oxobutanoate: step 1/2. Catalyzes the reversible reaction in which hydroxymethyl group from 5,10-methylenetetrahydrofolate is transferred onto alpha-ketoisovalerate to form ketopantoate. The sequence is that of 3-methyl-2-oxobutanoate hydroxymethyltransferase from Acetivibrio thermocellus (strain ATCC 27405 / DSM 1237 / JCM 9322 / NBRC 103400 / NCIMB 10682 / NRRL B-4536 / VPI 7372) (Clostridium thermocellum).